A 217-amino-acid chain; its full sequence is 2-phospho-L-lactate guanylyltransferase (217 aa).

The protein belongs to the CofC family. As to quaternary structure, homodimer.

It catalyses the reaction (2S)-2-phospholactate + GTP + H(+) = (2S)-lactyl-2-diphospho-5'-guanosine + diphosphate. Its pathway is cofactor biosynthesis; coenzyme F420 biosynthesis. Functionally, guanylyltransferase that catalyzes the activation of (2S)-2-phospholactate (2-PL) as (2S)-lactyl-2-diphospho-5'-guanosine, via the condensation of 2-PL with GTP. It is involved in the biosynthesis of coenzyme F420, a hydride carrier cofactor. The sequence is that of 2-phospho-L-lactate guanylyltransferase from Methanospirillum hungatei JF-1 (strain ATCC 27890 / DSM 864 / NBRC 100397 / JF-1).